Here is a 373-residue protein sequence, read N- to C-terminus: Transcription factor SPATULA (373 aa).

Residues 1–21 (MISQREEREEKKQRVMGDKKL) are compositionally biased toward basic and acidic residues. Disordered stretches follow at residues 1–46 (MISQ…PSSS) and 141–210 (VQGN…KRRR). Low complexity predominate over residues 141-160 (VQGNSSGTRVSSSSVGASGN). A compositionally biased stretch (acidic residues) spans 161-177 (ETDEYDCESEEGGEAVV). Positions 182-191 (SSKSGPSSRS) are enriched in low complexity. The segment covering 197–210 (RAAEVHNLSEKRRR) has biased composition (basic and acidic residues). One can recognise a bHLH domain in the interval 197 to 246 (RAAEVHNLSEKRRRSRINEKMKALQSLIPNSNKTDKASMLDEAIEYLKQL).

Homodimer. Interacts with HEC1, HEC2 and HEC3. Binds to RGL2 and RGA. In terms of tissue distribution, expressed in lateral root caps, young leaves, stipules, maturing pith cells of the stem, differentiating vascular cells, shoot apical meristems and flowers.

Its subcellular location is the nucleus. Functionally, transcription factor that plays a role in floral organogenesis. Promotes the growth of carpel margins and of pollen tract tissues derived from them. The sequence is that of Transcription factor SPATULA (SPT) from Arabidopsis thaliana (Mouse-ear cress).